Reading from the N-terminus, the 94-residue chain is Co-chaperonin GroES (94 aa).

The protein belongs to the GroES chaperonin family. As to quaternary structure, heptamer of 7 subunits arranged in a ring. Interacts with the chaperonin GroEL.

Its subcellular location is the cytoplasm. In terms of biological role, together with the chaperonin GroEL, plays an essential role in assisting protein folding. The GroEL-GroES system forms a nano-cage that allows encapsulation of the non-native substrate proteins and provides a physical environment optimized to promote and accelerate protein folding. GroES binds to the apical surface of the GroEL ring, thereby capping the opening of the GroEL channel. In Streptococcus pneumoniae (strain Hungary19A-6), this protein is Co-chaperonin GroES.